We begin with the raw amino-acid sequence, 741 residues long: Fibrinogen alpha chain (741 aa).

Positions 1-18 (MIPVTILCVLLCLNLAWA) are cleaved as a signal peptide. Q19 carries the pyrrolidone carboxylic acid modification. A coiled-coil region spans residues 67-506 (CCRMQGIIDD…STRRSYNGKD (440 aa)). Positions 270-307 (VAEARGDSSPSHTGKLITSSHRRESPSLVDKTSSASSV) are disordered. A compositionally biased stretch (polar residues) spans 277 to 288 (SSPSHTGKLITS). C310 and C341 are oxidised to a cystine. Composition is skewed to low complexity over residues 381 to 398 (STSSRHSIGSSTSSHVTG) and 435 to 449 (SASHSKTVLTSSSSS). Positions 381–510 (STSSRHSIGS…SYNGKDCDDI (130 aa)) are disordered. Positions 450–459 (FNKGGSTFET) are enriched in polar residues. The region spanning 498–739 (TRRSYNGKDC…VVRMKIRPLE (242 aa)) is the Fibrinogen C-terminal domain. Residues D666, D668, W670, and E672 each contribute to the Ca(2+) site. C674 and C687 are disulfide-bonded.

As to quaternary structure, heterohexamer; disulfide linked. Contains 2 sets of 3 non-identical chains (alpha, beta and gamma). The 2 heterotrimers are in head to head conformation with the N-termini in a small central domain. Conversion of fibrinogen to fibrin is triggered by thrombin, which cleaves fibrinopeptides A and B from alpha and beta chains, and thus exposes the N-terminal polymerization sites responsible for the formation of the soft clot. The soft clot is converted into the hard clot by factor XIIIA which catalyzes the epsilon-(gamma-glutamyl)lysine cross-linking between gamma chains (stronger) and between alpha chains (weaker) of different monomers. In terms of processing, forms F13A-mediated cross-links between a glutamine and the epsilon-amino group of a lysine residue, forming fibronectin-fibrinogen heteropolymers.

Its subcellular location is the secreted. Its function is as follows. Cleaved by the protease thrombin to yield monomers which, together with fibrinogen beta (FGB) and fibrinogen gamma (FGG), polymerize to form an insoluble fibrin matrix. Fibrin has a major function in hemostasis as one of the primary components of blood clots. This chain is Fibrinogen alpha chain (FGA), found in Gallus gallus (Chicken).